Reading from the N-terminus, the 101-residue chain is Small ribosomal subunit protein uS14 (101 aa).

The protein belongs to the universal ribosomal protein uS14 family. In terms of assembly, part of the 30S ribosomal subunit. Contacts proteins S3 and S10.

Binds 16S rRNA, required for the assembly of 30S particles and may also be responsible for determining the conformation of the 16S rRNA at the A site. The chain is Small ribosomal subunit protein uS14 from Rhizobium meliloti (strain 1021) (Ensifer meliloti).